The sequence spans 452 residues: Bifunctional purine biosynthesis protein PurH (452 aa).

In terms of domain architecture, MGS-like spans 1–115 (MKRILVSLYE…KNWKKVKPAF (115 aa)).

It belongs to the PurH family.

It carries out the reaction (6R)-10-formyltetrahydrofolate + 5-amino-1-(5-phospho-beta-D-ribosyl)imidazole-4-carboxamide = 5-formamido-1-(5-phospho-D-ribosyl)imidazole-4-carboxamide + (6S)-5,6,7,8-tetrahydrofolate. The catalysed reaction is IMP + H2O = 5-formamido-1-(5-phospho-D-ribosyl)imidazole-4-carboxamide. Its pathway is purine metabolism; IMP biosynthesis via de novo pathway; 5-formamido-1-(5-phospho-D-ribosyl)imidazole-4-carboxamide from 5-amino-1-(5-phospho-D-ribosyl)imidazole-4-carboxamide (10-formyl THF route): step 1/1. It participates in purine metabolism; IMP biosynthesis via de novo pathway; IMP from 5-formamido-1-(5-phospho-D-ribosyl)imidazole-4-carboxamide: step 1/1. This chain is Bifunctional purine biosynthesis protein PurH, found in Thermotoga maritima (strain ATCC 43589 / DSM 3109 / JCM 10099 / NBRC 100826 / MSB8).